Consider the following 598-residue polypeptide: Nuclear receptor subfamily 4 group A member 1 (598 aa).

Disordered regions lie at residues Met1–Leu50 and Leu120–Gly159. Composition is skewed to low complexity over residues Leu37–Leu50 and Ser134–Ser145. Residues Arg171 to Ser466 form a required for nuclear import region. Positions Glu264–Thr339 form a DNA-binding region, nuclear receptor. NR C4-type zinc fingers lie at residues Cys267 to Cys287 and Cys303 to Cys327. The segment at Ala268–Lys354 is required for binding NBRE-containing DNA. The segment at Ala299–Pro361 is required for the interaction with RXRA. Ser341 carries the phosphoserine; by PKA modification. The disordered stretch occupies residues Ser341–Pro361. Ser351 carries the post-translational modification Phosphoserine; by PKA, RPS6KA1 and RPS6KA3. One can recognise an NR LBD domain in the interval Ser360 to Thr595. A binds lipopolysaccharide region spans residues Pro521 to Gly544. Positions Pro584 to Thr595 are AF-2.

Belongs to the nuclear hormone receptor family. NR4 subfamily. Binds the NGFI-B response element (NBRE) as a monomer. Binds the Nur response element (NurRE), consisting of two inverse NBRE-related octanucleotide repeats separated by 6 base-pairs, as a dimer. Interacts (via N-terminus) with NLRP3 (via LRR repeat domain); the interaction is direct, requires binding of NR4A1/Nur77 to NBRE-containing dsDNA and lipopolysaccharide, and leads to non-canonical NLRP3 inflammasome activation. Interacts with GADD45GIP1. Interacts with STK11. Heterodimer (via DNA-binding domain) with RXRA (via C-terminus); DNA-binding of the heterodimer is enhanced by 9-cis retinoic acid. Competes for the RXRA interaction with EP300 and thereby attenuates EP300 mediated acetylation of RXRA. Interacts with NCOA1. Interacts with NCOA2. Interacts with NCOA3. Zn(2+) serves as cofactor. Phosphorylated at Ser-351 by RPS6KA1 and RPS6KA3 in response to mitogenic or stress stimuli. In terms of processing, acetylated by p300/CBP, acetylation increases stability. Deacetylated by HDAC1.

Its subcellular location is the cytoplasm. The protein resides in the cytosol. It localises to the nucleus. The protein localises to the mitochondrion. Its function is as follows. Orphan nuclear receptor. Binds the NGFI-B response element (NBRE) 5'-AAAGGTCA-3'. Binds 9-cis-retinoic acid outside of its ligand-binding (NR LBD) domain. Participates in energy homeostasis by sequestrating the kinase STK11 in the nucleus, thereby attenuating cytoplasmic AMPK activation. Regulates the inflammatory response in macrophages by regulating metabolic adaptations during inflammation, including repressing the transcription of genes involved in the citric acid cycle (TCA). Inhibits NF-kappa-B signaling by binding to low-affinity NF-kappa-B binding sites, such as at the IL2 promoter. May act concomitantly with NR4A2 in regulating the expression of delayed-early genes during liver regeneration. Plays a role in the vascular response to injury. Functionally, in the cytosol, upon its detection of both bacterial lipopolysaccharide (LPS) and NBRE-containing mitochondrial DNA released by GSDMD pores during pyroptosis, it promotes non-canonical NLRP3 inflammasome activation by stimulating association of NLRP3 and NEK7. The polypeptide is Nuclear receptor subfamily 4 group A member 1 (NR4A1) (Canis lupus familiaris (Dog)).